A 355-amino-acid chain; its full sequence is BAG family molecular chaperone regulator 1 (355 aa).

The tract at residues 1-112 (MAGRSAARRP…KNVTGTQVEE (112 aa)) is disordered. Residues 26–39 (PAREPRQSESRAER) are compositionally biased toward basic and acidic residues. Polar residues-rich tracts occupy residues 80-91 (SSQSEKVGSSSR) and 102-111 (SKNVTGTQVE). 7 repeat units span residues 103 to 108 (KNVTGT), 111 to 116 (EEVTKI), 117 to 122 (EEATQT), 123 to 128 (EEVTVA), 129 to 134 (EEVTQT), 141 to 146 (EEMVQT), and 147 to 152 (EEMETP). The segment at 111–209 (EEVTKIEEAT…LIFKGKSLKE (99 aa)) is 7 X 6 AA tandem repeat of E-E-X(4). The tract at residues 132-151 (TQTDNMAKTEEMVQTEEMET) is disordered. A Ubiquitin-like domain is found at 154–234 (LSVIVTHSNE…VMLIGEKSNP (81 aa)). Residues 182–229 (DLAQLVEEATGVPLPFQKLIFKGKSLKEMETPLSALGMQNGCRVMLIG) form an interaction with HSPA8 region. An interaction with PPP1R15A region spans residues 226–355 (MLIGEKSNPE…LQSTNLALAE (130 aa)). The BAG domain maps to 256–336 (HLQELNKELS…VFLAECDTVE (81 aa)).

In terms of assembly, homodimer. Forms a heteromeric complex with HSP70/HSC70. Binds to the ATPase domain of HSP/HSC70 chaperones. Interacts with NR3C1. Interacts with the N-terminal region of MAPRE2. Interacts with PPP1R15A. Interacts with BCL2 in an ATP-dependent manner. Interacts with SIAH1, HSPA8 (via NBD), HSPA1A (via NBD) and HSPA1B (via NBD). Interacts with SIAH2. Interacts with ESR1; the interaction is promoted in the absence of estradiol (17-beta-estradiol/E2). Post-translationally, ubiquitinated; mediated by SIAH1 or SIAH2 and leading to its subsequent proteasomal degradation. Isoform 2 is expressed in the heart, lung, kidney and spinal cord. Isoform 1 and isoform 2 are expressed in hematopoietic cell lines. The levels of isoform 2 are relatively constant in all the cell lines examined while the levels of isoform 1 are more variable (at protein level). Isoform 1 is expressed in the lung and kidney. Isoform 2 is expressed in various tissues, with highest levels in testis and stomach.

It localises to the nucleus. Its subcellular location is the cytoplasm. Co-chaperone for HSP70 and HSC70 chaperone proteins. Acts as a nucleotide-exchange factor (NEF) promoting the release of ADP from the HSP70 and HSC70 proteins thereby triggering client/substrate protein release. Nucleotide release is mediated via its binding to the nucleotide-binding domain (NBD) of HSPA8/HSC70 where as the substrate release is mediated via its binding to the substrate-binding domain (SBD) of HSPA8/HSC70. Inhibits the pro-apoptotic function of PPP1R15A, and has anti-apoptotic activity. Markedly increases the anti-cell death function of BCL2 induced by various stimuli. Involved in the STUB1-mediated proteasomal degradation of ESR1 in response to age-related circulating estradiol (17-beta-estradiol/E2) decline, thereby promotes neuronal apoptosis in response to ischemic reperfusion injury. In Mus musculus (Mouse), this protein is BAG family molecular chaperone regulator 1 (Bag1).